A 396-amino-acid polypeptide reads, in one-letter code: Probable peptidoglycan glycosyltransferase FtsW (396 aa).

Over 1-27 (MPFLDKVKQQYEDWTRITPSNLLYDRA) the chain is Cytoplasmic. A helical transmembrane segment spans residues 28–48 (LLLLFFVLLLIGLLAVSSASI). Residues 49 to 64 (PVGTRLFKDPFYFAKR) are Periplasmic-facing. The chain crosses the membrane as a helical span at residues 65 to 85 (DAIYVFLSCVTCYLCVQVPME). Residues 86 to 93 (KWEQWHVR) lie on the Cytoplasmic side of the membrane. The chain crosses the membrane as a helical span at residues 94-114 (LFAFAIFLLILVLIPGIGLSV). Topologically, residues 115–122 (NGARRWIP) are periplasmic. A helical transmembrane segment spans residues 123–143 (MVLFNFQPAEFAKLALTCFLA). The Cytoplasmic segment spans residues 144 to 157 (SYFTRKYDEVRSRK). Residues 158–178 (LSAFKPFALMGLMGLFLLSQP) traverse the membrane as a helical segment. Topologically, residues 179 to 183 (DLGST) are periplasmic. The next 2 helical transmembrane spans lie at 184–204 (VVLFVITFGLLFIVGANFWQF) and 205–225 (VGLMAFGGLLFVWLVLSSAYR). At 226-285 (LKRFTGFLDPFKDPYGTGFQLSNSLMAFGRGEWVGEGLGNSIQKLEYLPEAHTDFVMAVV) the chain is on the periplasmic side. The helical transmembrane segment at 286–306 (GEEFGFLGILVIVILLGLLIF) threads the bilayer. Topologically, residues 307 to 323 (RAMKIGRESLLLEQRFK) are cytoplasmic. A helical membrane pass occupies residues 324 to 344 (GFFAFGISFWIFFQGFVNLGM). At 345–355 (SLGLLPTKGLT) the chain is on the periplasmic side. Residues 356-376 (FPLISYGGSSLIIMSMTIGLL) form a helical membrane-spanning segment. At 377–396 (LRIDHENRLMRIGQARLRDD) the chain is on the cytoplasmic side.

This sequence belongs to the SEDS family. FtsW subfamily.

The protein localises to the cell inner membrane. The catalysed reaction is [GlcNAc-(1-&gt;4)-Mur2Ac(oyl-L-Ala-gamma-D-Glu-L-Lys-D-Ala-D-Ala)](n)-di-trans,octa-cis-undecaprenyl diphosphate + beta-D-GlcNAc-(1-&gt;4)-Mur2Ac(oyl-L-Ala-gamma-D-Glu-L-Lys-D-Ala-D-Ala)-di-trans,octa-cis-undecaprenyl diphosphate = [GlcNAc-(1-&gt;4)-Mur2Ac(oyl-L-Ala-gamma-D-Glu-L-Lys-D-Ala-D-Ala)](n+1)-di-trans,octa-cis-undecaprenyl diphosphate + di-trans,octa-cis-undecaprenyl diphosphate + H(+). Its pathway is cell wall biogenesis; peptidoglycan biosynthesis. Its function is as follows. Peptidoglycan polymerase that is essential for cell division. In Pasteurella multocida (strain Pm70), this protein is Probable peptidoglycan glycosyltransferase FtsW.